The sequence spans 464 residues: MEDEDGEDRALLGGRREADSAVHGAPRALSALCDPSRLAHRLVVLSLMCFLGFGSYFCYDNPAALQTQVKRDMQVNTTKFMLLYAWYSWPNVVLCFLGGFLIDRIFGIRWGTVIFSCFVCIGQVIFALGGIFNAFWLMELGRFVFGIGGESLAVAQNTYAVSWFKGKELNLVFGLQLSMARIGSTVNMNLMGWLYGKIEALLGSAGHMTLGVTLMIGCITCIFSLICALALAYLDRRAEKILHKEQGKTGEVIKLRDIKDFSLPLILVFVICVCYYVAVFPFIGLGKVFFMEKFRFSSQSASAINSIVYIISAPMSPLFGLLVDKTGKNIIWVLYAVAATLVSHMMLAFTFWNPWIAMCLLGFSYSLLACALWPMVAFIVPEHQLGTAYGFMQSIQNLGLAVIAILAGMILDSKGYLLLEVFFIACVSLSLLAVVCLYLVNRAQGGNLNYSAKQRERMKLSHPE.

The Dileucine internalization motif signature appears at 11-12 (LL). Ser20 carries the post-translational modification Phosphoserine. 12 helical membrane passes run 38–58 (LAHRLVVLSLMCFLGFGSYFC), 82–102 (LLYAWYSWPNVVLCFLGGFLI), 112–132 (TVIFSCFVCIGQVIFALGGIF), 134–154 (AFWLMELGRFVFGIGGESLAV), 190–210 (LMGWLYGKIEALLGSAGHMTL), 214–234 (LMIGCITCIFSLICALALAYL), 265–285 (LILVFVICVCYYVAVFPFIGL), 303–323 (AINSIVYIISAPMSPLFGLLV), 330–350 (IIWVLYAVAATLVSHMMLAFT), 360–380 (LLGFSYSLLACALWPMVAFIV), 391–411 (FMQSIQNLGLAVIAILAGMIL), and 417–437 (LLLEVFFIACVSLSLLAVVCL).

Belongs to the major facilitator superfamily. In terms of assembly, homodimer. Interacts with lysosomal protein GLMP (via lumenal domain); the interaction starts while both proteins are still in the endoplasmic reticulum and is required for stabilization of MFSD1 in lysosomes but has no direct effect on its targeting to lysosomes or transporter activity. Post-translationally, not N-glycosylated. In brain, expressed in the cortex, striatum hippocampus, hypothalamus, thalamus and brainstem (at protein level). Widely expressed with highest levels in kidney and spleen (at protein level).

Its subcellular location is the lysosome membrane. It carries out the reaction L-alpha-aminoacyl-L-arginine(out) = L-alpha-aminoacyl-L-arginine(in). The catalysed reaction is L-arginyl-L-alpha-amino acid(out) = L-arginyl-L-alpha-amino acid(in). The enzyme catalyses L-arginyl-glycine(out) = L-arginyl-glycine(in). It catalyses the reaction L-alpha-aminoacyl-L-lysine(out) = L-alpha-aminoacyl-L-lysine(in). It carries out the reaction L-aspartyl-L-lysine(out) = L-aspartyl-L-lysine(in). The catalysed reaction is L-alanyl-L-lysine(out) = L-alanyl-L-lysine(in). The enzyme catalyses L-lysyl-L-alpha-amino acid(out) = L-lysyl-L-alpha-amino acid(in). It catalyses the reaction L-lysyl-L-alanine(out) = L-lysyl-L-alanine(in). It carries out the reaction L-lysyl-L-lysine(out) = L-lysyl-L-lysine(in). The catalysed reaction is L-lysyl-glycine(out) = L-lysyl-glycine(in). The enzyme catalyses L-alpha-aminoacyl-L-histidine(out) = L-alpha-aminoacyl-L-histidine(in). It catalyses the reaction L-histidyl-L-alpha-amino acid(out) = L-histidyl-L-alpha-amino acid(in). It carries out the reaction L-histidyl-glycine(out) = L-histidyl-glycine(in). In terms of biological role, lysosomal dipeptide uniporter that selectively exports lysine, arginine or histidine-containing dipeptides with a net positive charge from the lysosome lumen into the cytosol. Could play a role in a specific type of protein O-glycosylation indirectly regulating macrophages migration and tissue invasion. Also essential for liver homeostasis. In Mus musculus (Mouse), this protein is Lysosomal dipeptide transporter MFSD1.